Here is a 431-residue protein sequence, read N- to C-terminus: Histidine--tRNA ligase (431 aa).

The protein belongs to the class-II aminoacyl-tRNA synthetase family. As to quaternary structure, homodimer.

It localises to the cytoplasm. The catalysed reaction is tRNA(His) + L-histidine + ATP = L-histidyl-tRNA(His) + AMP + diphosphate + H(+). The sequence is that of Histidine--tRNA ligase from Neisseria meningitidis serogroup C (strain 053442).